The primary structure comprises 618 residues: Proline--tRNA ligase (618 aa).

This sequence belongs to the class-II aminoacyl-tRNA synthetase family. ProS type 1 subfamily. As to quaternary structure, homodimer.

It is found in the cytoplasm. It catalyses the reaction tRNA(Pro) + L-proline + ATP = L-prolyl-tRNA(Pro) + AMP + diphosphate. Its function is as follows. Catalyzes the attachment of proline to tRNA(Pro) in a two-step reaction: proline is first activated by ATP to form Pro-AMP and then transferred to the acceptor end of tRNA(Pro). As ProRS can inadvertently accommodate and process non-cognate amino acids such as alanine and cysteine, to avoid such errors it has two additional distinct editing activities against alanine. One activity is designated as 'pretransfer' editing and involves the tRNA(Pro)-independent hydrolysis of activated Ala-AMP. The other activity is designated 'posttransfer' editing and involves deacylation of mischarged Ala-tRNA(Pro). The misacylated Cys-tRNA(Pro) is not edited by ProRS. The chain is Proline--tRNA ligase from Streptococcus equi subsp. equi (strain 4047).